A 758-amino-acid polypeptide reads, in one-letter code: 5-methyltetrahydropteroyltriglutamate--homocysteine methyltransferase (758 aa).

Residues 16–19 and lysine 116 each bind 5-methyltetrahydropteroyltri-L-glutamate; that span reads RELK. Residues 436–438 and glutamate 489 contribute to the L-homocysteine site; that span reads IGS. L-methionine-binding positions include 436 to 438 and glutamate 489; that span reads IGS. 5-methyltetrahydropteroyltri-L-glutamate-binding positions include 520–521 and tryptophan 566; that span reads RC. Residue aspartate 604 coordinates L-homocysteine. An L-methionine-binding site is contributed by aspartate 604. Position 610 (glutamate 610) interacts with 5-methyltetrahydropteroyltri-L-glutamate. Zn(2+)-binding residues include histidine 646, cysteine 648, and glutamate 670. Histidine 699 serves as the catalytic Proton donor. Cysteine 731 contacts Zn(2+).

This sequence belongs to the vitamin-B12 independent methionine synthase family. Zn(2+) serves as cofactor.

It carries out the reaction 5-methyltetrahydropteroyltri-L-glutamate + L-homocysteine = tetrahydropteroyltri-L-glutamate + L-methionine. Its pathway is amino-acid biosynthesis; L-methionine biosynthesis via de novo pathway; L-methionine from L-homocysteine (MetE route): step 1/1. Catalyzes the transfer of a methyl group from 5-methyltetrahydrofolate to homocysteine resulting in methionine formation. The sequence is that of 5-methyltetrahydropteroyltriglutamate--homocysteine methyltransferase from Nitrosococcus oceani (strain ATCC 19707 / BCRC 17464 / JCM 30415 / NCIMB 11848 / C-107).